A 1111-amino-acid chain; its full sequence is Kinesin-like protein KIP1 (1111 aa).

Residues M1–T11 are compositionally biased toward polar residues. The segment at M1–M34 is disordered. One can recognise a Kinesin motor domain in the interval N52 to I410. G141–T148 lines the ATP pocket. 4 coiled-coil regions span residues T424 to N510, K648 to S670, K710 to I780, and H808 to L828. Positions A1007–S1016 are enriched in basic and acidic residues. Residues A1007 to Q1111 form a disordered region. Composition is skewed to polar residues over residues N1017 to P1038 and S1057 to N1082.

This sequence belongs to the TRAFAC class myosin-kinesin ATPase superfamily. Kinesin family. BimC subfamily. Might be dimeric.

Its subcellular location is the cytoplasm. The protein localises to the cytoskeleton. It is found in the spindle. Functionally, required for assembly of the mitotic spindle. Interacts with spindle microtubules to produce an outwardly directed force acting upon the poles. Following spindle assembly, CIN8 and KIP1 apparently act to oppose a force that draws separated poles back together. This force seems to be mediate by KAR3. The chain is Kinesin-like protein KIP1 (KIP1) from Saccharomyces cerevisiae (strain ATCC 204508 / S288c) (Baker's yeast).